Consider the following 202-residue polypeptide: Polyamine-modulated factor 1 (202 aa).

Basic and acidic residues predominate over residues 1–15 (MAEVSRDSEAAERGP). Residues 1-26 (MAEVSRDSEAAERGPEGSSPEAVPGD) are disordered. Residues 153 to 194 (EAKNQELADAVLAGRRQVEELQQQVRALQQTWQALHREQREL) adopt a coiled-coil conformation.

Component of the MIS12 complex composed of MIS12, DSN1, NSL1 and PMF1. Interacts with COPS7A. Interacts via its coiled-coil domain with the leucine-zipper domain of NFE2L2. The interaction with NFE2L2 is required for the transcriptional regulation of SSAT.

The protein localises to the nucleus. The protein resides in the chromosome. It is found in the centromere. It localises to the kinetochore. Part of the MIS12 complex which is required for normal chromosome alignment and segregation and for kinetochore formation during mitosis. May act as a cotranscription partner of NFE2L2 involved in regulation of polyamine-induced transcription of SSAT. This Mus musculus (Mouse) protein is Polyamine-modulated factor 1.